Here is a 1405-residue protein sequence, read N- to C-terminus: MKSLLDLFKQFTPDEHFNAIKIGMASPEKIRSWSFGEVKKPETINYRTFKPERDGLFCAKIFGPIKDYECLCGKYKRLKHRGVICEKCGVEVTQTKVRRERMGHIDLAAPCAHIWFLKSLPSRLGLVLDMTLRDIERVLYFEAYVVTDPGMTPLKKFSIMSEDDFDAKFKEYGDEFQAKMGAEGIKDLLQSLDIDGSIERLRNDPTGSELKIKKNTKRLKLLEAFKKSGIKPEWMVLEVLPVLPPDLRPLVPLDGGRFATSDLNDLYRRVINRNSRLRRLLELKAPEIIARNEKRMLQEAVDSLLDNGRRGKAMTGANKRALKSLADMIKGKSGRFRQNLLGKRVDYSGRSVIVVGPTLKLHQCGLPKLMALELFKPFIFARLEAMGIATTIKAAKKEVESGTPVVWDILEEVIKEHPVMLNRAPTLHRLGIQAFEPILIEGKAIQLHPLVCAAFNADFDGDQMAVHVPLSVEAQVECRTLMLASNNVLFPSNGEPSIVPSQDVVLGLYYTTRERINGKGEGLIFADVGEVQRAFDGGAVELNSRINVRLTEYIKDKQTGELVPSTKLWETTAGRALLSEILPKGLPFENVNKALKKKEISKLINVSFRKCGLKETVVFADKLLQYGFRLATKAGISICLDDMLVPTEKPGIIEQAEQEVKEIAQQYTSGLVTSGERYNKVVDIWGKAGDEVSKVMMAQLSKEIVTDRHGQQVQQESFNSIYMMADSGARGSPAQIRQVAGMRGLMAKPDGSIIETPITANFREGLNVLEYFISTHGARKGLADTALKTANSGYLTRRLVDVTQDLVVTEQDCGTHSGYLMRAIVEGGEVIESLRDRILGRTAADDVLHPENRSVLAPAGTMLDEDQIDELEVAGVDEVKVRTALTCETRFGICAKCYGRDLGRGGLVNGGEAVGVIAAQSIGEPGTQLTMRTFHIGGAASRAAIASSVEAKSNGNIGFNATMRYVTNGKKELVVISRSGEIVIHDEHGRERERHKVPYGAVLAVKADQTIKSGAILANWDPLTRPIITEFAGKAHFENVEEGLTVAKQVDEVTGLSTMVVIDPKHRGSAKVIRPIVKLIDASGNEVKIPGTDHSVTIGFPIGALVQVRDGQDVSPGEVLARIPIEGQKTRDITGGLPRVAELFEARSPKDKGVLAEMTGTVSFGKETKGKIRLQITDPDGAVWEDLVPKEKNIIVHEGQVVNKGESVVDGPADPQDILRLLGSEELARYIVDEVQDVYRLQGVKINDKHIEVIVRQMLRRVVVENAGDSTYINGEQVERSEILNTNDALRADGKIPARFTNLLLGITKASLSTDSFISAASFQETTRVLTEAAIMGKRDELRGLKENVIVGRLIPAGTGMAYHEARKVRENMDDTERRAIAEAEAAELAGQAEATEANEGAAAE.

Residues C70, C72, C85, and C88 each contribute to the Zn(2+) site. Mg(2+) is bound by residues D458, D460, and D462. Residues C813, C887, C894, and C897 each coordinate Zn(2+).

Belongs to the RNA polymerase beta' chain family. As to quaternary structure, the RNAP catalytic core consists of 2 alpha, 1 beta, 1 beta' and 1 omega subunit. When a sigma factor is associated with the core the holoenzyme is formed, which can initiate transcription. The cofactor is Mg(2+). Zn(2+) is required as a cofactor.

The catalysed reaction is RNA(n) + a ribonucleoside 5'-triphosphate = RNA(n+1) + diphosphate. DNA-dependent RNA polymerase catalyzes the transcription of DNA into RNA using the four ribonucleoside triphosphates as substrates. In Albidiferax ferrireducens (strain ATCC BAA-621 / DSM 15236 / T118) (Rhodoferax ferrireducens), this protein is DNA-directed RNA polymerase subunit beta'.